A 396-amino-acid chain; its full sequence is CCA-adding enzyme (396 aa).

Residues glycine 32 and arginine 35 each contribute to the ATP site. Positions 32 and 35 each coordinate CTP. 2 residues coordinate Mg(2+): aspartate 45 and aspartate 47. Arginine 116, aspartate 159, arginine 162, arginine 165, and arginine 168 together coordinate ATP. CTP contacts are provided by arginine 116, aspartate 159, arginine 162, arginine 165, and arginine 168.

The protein belongs to the tRNA nucleotidyltransferase/poly(A) polymerase family. Bacterial CCA-adding enzyme type 3 subfamily. Homodimer. Mg(2+) is required as a cofactor.

The enzyme catalyses a tRNA precursor + 2 CTP + ATP = a tRNA with a 3' CCA end + 3 diphosphate. The catalysed reaction is a tRNA with a 3' CCA end + 2 CTP + ATP = a tRNA with a 3' CCACCA end + 3 diphosphate. In terms of biological role, catalyzes the addition and repair of the essential 3'-terminal CCA sequence in tRNAs without using a nucleic acid template. Adds these three nucleotides in the order of C, C, and A to the tRNA nucleotide-73, using CTP and ATP as substrates and producing inorganic pyrophosphate. tRNA 3'-terminal CCA addition is required both for tRNA processing and repair. Also involved in tRNA surveillance by mediating tandem CCA addition to generate a CCACCA at the 3' terminus of unstable tRNAs. While stable tRNAs receive only 3'-terminal CCA, unstable tRNAs are marked with CCACCA and rapidly degraded. The protein is CCA-adding enzyme of Lactobacillus delbrueckii subsp. bulgaricus (strain ATCC 11842 / DSM 20081 / BCRC 10696 / JCM 1002 / NBRC 13953 / NCIMB 11778 / NCTC 12712 / WDCM 00102 / Lb 14).